We begin with the raw amino-acid sequence, 698 residues long: SPX domain-containing membrane protein OsI_21475 (698 aa).

The SPX domain occupies 2 to 145 (VNFGKKLMAD…GYRFTDYYVT (144 aa)). 6 consecutive transmembrane segments (helical) span residues 248 to 268 (FMSL…TYII), 279 to 299 (LGAA…AQIF), 316 to 336 (LIFS…AYDM), 339 to 357 (LTVL…ARAV), 376 to 396 (AGFV…AGLL), and 412 to 432 (LPGW…WISF). The disordered stretch occupies residues 467–495 (LLRDSSKKDEDDDEEVDDSEEGTHDSRKP). The span at 476–486 (EDDDEEVDDSE) shows a compositional bias: acidic residues. The next 5 membrane-spanning stretches (helical) occupy residues 514-534 (LLIY…SSVI), 545-565 (AVAI…AVVG), 577-597 (LLMV…KITS), 605-625 (VVSA…NLSL), and 671-691 (LLNV…ASTF).

The protein belongs to the major facilitator superfamily.

The protein resides in the membrane. In Oryza sativa subsp. indica (Rice), this protein is SPX domain-containing membrane protein OsI_21475.